Reading from the N-terminus, the 135-residue chain is Galectin-1 (135 aa).

A2 is subject to N-acetylalanine. Residues 4 to 135 (GLVASNLNLK…DFKIKCVAFE (132 aa)) form the Galectin domain. An N6-acetyllysine mark is found at K13 and K29. The residue at position 30 (S30) is a Phosphoserine. Residues 45–49 (HFNPR), H53, N62, and 69–72 (WGAE) each bind a beta-D-galactoside. K108 carries the N6-acetyllysine; alternate modification. An N6-succinyllysine; alternate modification is found at K108. K128 bears the N6-acetyllysine mark.

Homodimer. Binds LGALS3BP. Interacts with CD2, CD3, CD4, CD6, CD7, CD43, ALCAM and CD45. Interacts with laminin (via poly-N-acetyllactosamine). Interacts with SUSD2. Interacts with cargo receptor TMED10; the interaction mediates the translocation from the cytoplasm into the ERGIC (endoplasmic reticulum-Golgi intermediate compartment) and thereby secretion.

The protein resides in the secreted. The protein localises to the extracellular space. Its subcellular location is the extracellular matrix. It is found in the cytoplasm. Its function is as follows. Lectin that binds beta-galactoside and a wide array of complex carbohydrates. Plays a role in regulating apoptosis, cell proliferation and cell differentiation. Inhibits CD45 protein phosphatase activity and therefore the dephosphorylation of Lyn kinase. Strong inducer of T-cell apoptosis. Has hemagglutinating activity towards human erythrocytes. The chain is Galectin-1 from Capra hircus (Goat).